Consider the following 312-residue polypeptide: Putative olfactory receptor 1F2 (312 aa).

The Extracellular portion of the chain corresponds to 1-25; the sequence is MERDKPVSVSEFLLLGLSRQPQQQH. A helical membrane pass occupies residues 26–49; sequence LLFVFFLSMYLATVLGNLLIILAI. Residues 50 to 57 are Cytoplasmic-facing; the sequence is SIDSRLHT. A helical transmembrane segment spans residues 58 to 78; sequence PMYFFLSNMSFVDNCFSTTVP. Residues 79–99 lie on the Extracellular side of the membrane; it reads KMLANHILRTQTISFSGCLMQ. An intrachain disulfide couples Cys-96 to Cys-188. The helical transmembrane segment at 100 to 119 threads the bilayer; the sequence is MYFISELADMDNFLLAVMAY. Topologically, residues 120 to 138 are cytoplasmic; it reads DRFVAVCRPLHYTAKMIHQ. A helical membrane pass occupies residues 139 to 157; the sequence is LCALLVTGSWVVANSNALL. Topologically, residues 158–195 are extracellular; that stretch reads HTLLMARLSFCADNTIPHIFCDVTPLLKLSCSDTHLSE. A helical membrane pass occupies residues 196 to 218; it reads VMILTEAALVTITPFLCLLASYM. Topologically, residues 219–235 are cytoplasmic; sequence HITCVVLRVPSTKGRWK. A helical membrane pass occupies residues 236-258; it reads AFSTCGSHLAVVLLFYGTIMSPY. Residues 259–271 lie on the Extracellular side of the membrane; sequence FRTSSSHSAQRDI. A helical membrane pass occupies residues 272 to 291; the sequence is AAAVRFTVVTPVMNPLIYSL. Residues 292-312 lie on the Cytoplasmic side of the membrane; it reads RNKDIKGALVKVVAVKFFSVQ.

It belongs to the G-protein coupled receptor 1 family.

Its subcellular location is the cell membrane. Its function is as follows. Odorant receptor. The sequence is that of Putative olfactory receptor 1F2 (OR1F2P) from Homo sapiens (Human).